The sequence spans 807 residues: Hyaluronate lyase (807 aa).

The first 40 residues, 1-40 (MTYRIKKWQKLSTITLLMAGVITLNGGEFRSVDKHQIAVA), serve as a signal peptide directing secretion. Catalysis depends on residues Asn241, His297, and Tyr306.

This sequence belongs to the polysaccharide lyase 8 family.

The protein localises to the secreted. It catalyses the reaction [hyaluronan](n) = n 3-(4-deoxy-beta-D-gluc-4-enuronosyl)-N-acetyl-D-glucosamine + H2O. This chain is Hyaluronate lyase, found in Staphylococcus aureus (strain NCTC 8325 / PS 47).